We begin with the raw amino-acid sequence, 446 residues long: Methylenetetrahydrofolate--tRNA-(uracil-5-)-methyltransferase TrmFO (446 aa).

An FAD-binding site is contributed by 8-13; sequence GGGLAG.

The protein belongs to the MnmG family. TrmFO subfamily. Requires FAD as cofactor.

The protein localises to the cytoplasm. The catalysed reaction is uridine(54) in tRNA + (6R)-5,10-methylene-5,6,7,8-tetrahydrofolate + NADH + H(+) = 5-methyluridine(54) in tRNA + (6S)-5,6,7,8-tetrahydrofolate + NAD(+). The enzyme catalyses uridine(54) in tRNA + (6R)-5,10-methylene-5,6,7,8-tetrahydrofolate + NADPH + H(+) = 5-methyluridine(54) in tRNA + (6S)-5,6,7,8-tetrahydrofolate + NADP(+). Its function is as follows. Catalyzes the folate-dependent formation of 5-methyl-uridine at position 54 (M-5-U54) in all tRNAs. This is Methylenetetrahydrofolate--tRNA-(uracil-5-)-methyltransferase TrmFO from Zymomonas mobilis subsp. mobilis (strain ATCC 31821 / ZM4 / CP4).